The primary structure comprises 753 residues: Bile salt-activated lipase (753 aa).

The N-terminal stretch at Met-1–Ala-20 is a signal peptide. The interval Ala-21–Met-121 is heparin-binding. Residues Cys-84 and Cys-100 are joined by a disulfide bond. An N-linked (GlcNAc...) (complex) asparagine glycan is attached at Asn-207. Ser-214 functions as the Acyl-ester intermediate in the catalytic mechanism. Cys-266 and Cys-277 are joined by a disulfide. Residues Asp-340 and His-455 each act as charge relay system in the active site. Positions Gln-555–Phe-753 are disordered. O-linked (GalNAc...) threonine glycosylation is found at Thr-558, Thr-569, and Thr-579. Tandem repeats lie at residues Pro-559–Thr-569, Pro-570–Ala-580, Pro-581–Pro-591, Pro-592–Pro-602, Pro-603–Pro-613, Pro-614–Pro-624, Pro-625–Pro-635, Pro-636–Pro-646, Pro-647–Pro-657, Pro-658–Pro-668, Pro-669–Pro-679, Pro-680–Pro-690, Pro-691–Pro-701, Pro-702–Ala-712, Pro-713–Pro-723, Pro-724–Ala-734, and Pro-735–Ala-745. Residues Pro-559–Ala-745 are 17 X 11 AA tandem repeats, glycodomain, O-linked (mucin type). O-linked (GalNAc...) threonine glycans are attached at residues Thr-607, Thr-618, Thr-629, Thr-640, Thr-651, Thr-662, and Thr-673. The segment covering Pro-668–Pro-683 has biased composition (pro residues).

The protein belongs to the type-B carboxylesterase/lipase family. In terms of assembly, interacts with CLC. N- and O-glycosylated. In terms of tissue distribution, mammary gland and pancreas. Detected in pancreatic and duodenal juice (at protein level). Expressed by eosinophils.

It localises to the secreted. It carries out the reaction a triacylglycerol + H2O = a diacylglycerol + a fatty acid + H(+). It catalyses the reaction 1,2,3-tri-(9Z-octadecenoyl)-glycerol + H2O = di-(9Z)-octadecenoylglycerol + (9Z)-octadecenoate + H(+). The catalysed reaction is 1,2,3-trioctanoylglycerol + H2O = dioctanoylglycerol + octanoate + H(+). The enzyme catalyses a sterol ester + H2O = a sterol + a fatty acid + H(+). It carries out the reaction cholesteryl (9Z-octadecenoate) + H2O = cholesterol + (9Z)-octadecenoate + H(+). It catalyses the reaction an acetyl ester + H2O = an aliphatic alcohol + acetate + H(+). The catalysed reaction is a butanoate ester + H2O = an aliphatic alcohol + butanoate + H(+). The enzyme catalyses 9-hexadecanoyloxy-octadecanoate + H2O = 9-hydroxy-octadecanoate + hexadecanoate + H(+). It carries out the reaction 9-(9Z-octadecenoyloxy)-octadecanoate + H2O = 9-hydroxy-octadecanoate + (9Z)-octadecenoate + H(+). It catalyses the reaction 1-hexadecanoyl-sn-glycero-3-phosphocholine + H2O = sn-glycerol 3-phosphocholine + hexadecanoate + H(+). The catalysed reaction is 12-hexadecanoyloxy-octadecanoate + H2O = 12-hydroxyoctadecanoate + hexadecanoate + H(+). The enzyme catalyses 12-(9Z-octadecenoyloxy)-octadecanoate + H2O = 12-hydroxyoctadecanoate + (9Z)-octadecenoate + H(+). It carries out the reaction 13-(9Z-octadecenoyloxy)-octadecanoate + H2O = 13-hydroxy-octadecanoate + (9Z)-octadecenoate + H(+). It catalyses the reaction 9-(9Z-hexadecenoyloxy)-octadecanoate + H2O = (9Z)-hexadecenoate + 9-hydroxy-octadecanoate + H(+). The catalysed reaction is 12-(9Z-hexadecenoyloxy)-octadecanoate + H2O = 12-hydroxyoctadecanoate + (9Z)-hexadecenoate + H(+). The enzyme catalyses 13-(9Z-hexadecenoyloxy)-octadecanoate + H2O = 13-hydroxy-octadecanoate + (9Z)-hexadecenoate + H(+). It carries out the reaction 12-octadecanoyloxy-octadecanoate + H2O = 12-hydroxyoctadecanoate + octadecanoate + H(+). It catalyses the reaction 13-octadecanoyloxy-octadecanoate + H2O = 13-hydroxy-octadecanoate + octadecanoate + H(+). The catalysed reaction is 5-(9Z-hexadecenoyloxy)-octadecanoate + H2O = 5-hydroxy-octadecanoate + (9Z)-hexadecenoate + H(+). The enzyme catalyses 9-octadecanoyloxy-octadecanoate + H2O = 9-hydroxy-octadecanoate + octadecanoate + H(+). Activated by bile salts such as sodium taurocholate. Functionally, catalyzes the hydrolysis of a wide range of substrates including cholesteryl esters, phospholipids, lysophospholipids, di- and tri-acylglycerols, and fatty acid esters of hydroxy fatty acids (FAHFAs). Preferentially hydrolyzes FAHFAs with the ester bond further away from the carboxylate. Unsaturated FAHFAs are hydrolyzed more quickly than saturated FAHFAs. Has an essential role in the complete digestion of dietary lipids and their intestinal absorption, along with the absorption of fat-soluble vitamins. The polypeptide is Bile salt-activated lipase (CEL) (Homo sapiens (Human)).